Reading from the N-terminus, the 148-residue chain is Deoxyuridine 5'-triphosphate nucleotidohydrolase (148 aa).

Residues 67-69, N80, 84-86, and M94 contribute to the substrate site; these read RSG and LID.

It belongs to the dUTPase family. It depends on Mg(2+) as a cofactor.

The catalysed reaction is dUTP + H2O = dUMP + diphosphate + H(+). It participates in pyrimidine metabolism; dUMP biosynthesis; dUMP from dCTP (dUTP route): step 2/2. In terms of biological role, this enzyme is involved in nucleotide metabolism: it produces dUMP, the immediate precursor of thymidine nucleotides and it decreases the intracellular concentration of dUTP so that uracil cannot be incorporated into DNA. This chain is Deoxyuridine 5'-triphosphate nucleotidohydrolase, found in Francisella tularensis subsp. tularensis (strain FSC 198).